A 593-amino-acid polypeptide reads, in one-letter code: Aspartate--tRNA ligase (593 aa).

L-aspartate is bound at residue E180. Residues 204–207 (QIFK) are aspartate. R226 lines the L-aspartate pocket. Residues 226–228 (RDE) and Q235 each bind ATP. H453 contacts L-aspartate. E487 provides a ligand contact to ATP. An L-aspartate-binding site is contributed by R494. 539 to 542 (GLDR) provides a ligand contact to ATP.

This sequence belongs to the class-II aminoacyl-tRNA synthetase family. Type 1 subfamily. In terms of assembly, homodimer.

The protein resides in the cytoplasm. The catalysed reaction is tRNA(Asp) + L-aspartate + ATP = L-aspartyl-tRNA(Asp) + AMP + diphosphate. In terms of biological role, catalyzes the attachment of L-aspartate to tRNA(Asp) in a two-step reaction: L-aspartate is first activated by ATP to form Asp-AMP and then transferred to the acceptor end of tRNA(Asp). This Clostridium botulinum (strain ATCC 19397 / Type A) protein is Aspartate--tRNA ligase.